The sequence spans 323 residues: Aspartate carbamoyltransferase catalytic subunit (323 aa).

Carbamoyl phosphate contacts are provided by R71 and T72. K99 provides a ligand contact to L-aspartate. Residues R121, H151, and Q154 each contribute to the carbamoyl phosphate site. R184 and R239 together coordinate L-aspartate. Carbamoyl phosphate-binding residues include G280 and P281.

It belongs to the aspartate/ornithine carbamoyltransferase superfamily. ATCase family. As to quaternary structure, heterododecamer (2C3:3R2) of six catalytic PyrB chains organized as two trimers (C3), and six regulatory PyrI chains organized as three dimers (R2).

The catalysed reaction is carbamoyl phosphate + L-aspartate = N-carbamoyl-L-aspartate + phosphate + H(+). Its pathway is pyrimidine metabolism; UMP biosynthesis via de novo pathway; (S)-dihydroorotate from bicarbonate: step 2/3. Catalyzes the condensation of carbamoyl phosphate and aspartate to form carbamoyl aspartate and inorganic phosphate, the committed step in the de novo pyrimidine nucleotide biosynthesis pathway. The polypeptide is Aspartate carbamoyltransferase catalytic subunit (Cupriavidus pinatubonensis (strain JMP 134 / LMG 1197) (Cupriavidus necator (strain JMP 134))).